We begin with the raw amino-acid sequence, 498 residues long: Probable malate:quinone oxidoreductase (498 aa).

This sequence belongs to the MQO family. The cofactor is FAD.

It catalyses the reaction (S)-malate + a quinone = a quinol + oxaloacetate. The protein operates within carbohydrate metabolism; tricarboxylic acid cycle; oxaloacetate from (S)-malate (quinone route): step 1/1. The polypeptide is Probable malate:quinone oxidoreductase (Prochlorococcus marinus (strain MIT 9312)).